A 256-amino-acid polypeptide reads, in one-letter code: Small ribosomal subunit protein eS1 (256 aa).

Basic residues predominate over residues 1-18 (MAVGKNKRLSKGKKGLKK). A disordered region spans residues 1–20 (MAVGKNKRLSKGKKGLKKKA). At Ala-2 the chain carries N-acetylalanine; partial.

This sequence belongs to the eukaryotic ribosomal protein eS1 family. Component of the small ribosomal subunit. Mature ribosomes consist of a small (40S) and a large (60S) subunit. The 40S subunit contains about 33 different proteins and 1 molecule of RNA (18S). The 60S subunit contains about 49 different proteins and 3 molecules of RNA (25S, 5.8S and 5S).

The protein resides in the cytoplasm. This Podospora anserina (strain S / ATCC MYA-4624 / DSM 980 / FGSC 10383) (Pleurage anserina) protein is Small ribosomal subunit protein eS1.